The following is a 663-amino-acid chain: DNA ligase (663 aa).

NAD(+)-binding positions include 31–35 (DFEFD), 80–81 (SL), and Glu-110. Lys-112 functions as the N6-AMP-lysine intermediate in the catalytic mechanism. NAD(+) is bound by residues Arg-133, Glu-170, Lys-285, and Lys-309. Positions 404, 407, 422, and 428 each coordinate Zn(2+). The region spanning 585–663 (FIDNKLAGKT…SEDEFLKMIE (79 aa)) is the BRCT domain.

The protein belongs to the NAD-dependent DNA ligase family. LigA subfamily. The cofactor is Mg(2+). Mn(2+) is required as a cofactor.

It catalyses the reaction NAD(+) + (deoxyribonucleotide)n-3'-hydroxyl + 5'-phospho-(deoxyribonucleotide)m = (deoxyribonucleotide)n+m + AMP + beta-nicotinamide D-nucleotide.. DNA ligase that catalyzes the formation of phosphodiester linkages between 5'-phosphoryl and 3'-hydroxyl groups in double-stranded DNA using NAD as a coenzyme and as the energy source for the reaction. It is essential for DNA replication and repair of damaged DNA. This chain is DNA ligase, found in Azobacteroides pseudotrichonymphae genomovar. CFP2.